A 174-amino-acid polypeptide reads, in one-letter code: Isomerase prhC (174 aa).

This sequence belongs to the trt14 isomerase family. In terms of assembly, homodimer.

Its pathway is secondary metabolite biosynthesis; terpenoid biosynthesis. Its function is as follows. Isomerase; part of the gene cluster that mediates the biosynthesis of paraherquonin, a meroterpenoid with a unique, highly congested hexacyclic molecular architecture. The first step of the pathway is the synthesis of 3,5-dimethylorsellinic acid (DMOA) by the polyketide synthase prhL. Synthesis of DMOA is followed by farnesylation by the prenyltransferase prhE, methylesterification by the methyl-transferase prhM, epoxidation of the prenyl chain by the flavin-dependent monooxygenase prhF, and cyclization of the farnesyl moiety by the terpene cyclase prhH, to yield the tetracyclic intermediate, protoaustinoid A. The short chain dehydrogenase prhI then oxidizes the C-3 alcohol group of the terpene cyclase product to transform protoaustinoid A into protoaustinoid B. The FAD-binding monooxygenase prhJ catalyzes the oxidation of protoaustinoid B into preaustinoid A which is further oxidized into preaustinoid A1 by FAD-binding monooxygenase phrK. Finally, prhA leads to berkeleydione via the berkeleyone B intermediate. PrhA is a multifunctional dioxygenase that first desaturates at C5-C6 to form berkeleyone B, followed by rearrangement of the A/B-ring to form the cycloheptadiene moiety in berkeleydione. Berkeleydione serves as the key intermediate for the biosynthesis of paraherquonin as well as many other meroterpenoids. The cytochrome P450 monooxygenases prhB, prhD, and prhN, as well as the isomerase prhC, are probably involved in the late stage of paraherquonin biosynthesis, after the production of berkeleydione. Especially prhC might be a multifunctional enzyme that catalyzes the D-ring expansion via intramolecular methoxy rearrangement, as well as the hydrolysis of the expanded D-ring. This chain is Isomerase prhC, found in Penicillium brasilianum.